A 121-amino-acid polypeptide reads, in one-letter code: MGSDTAWSPARMIGIAALAVGIVLGLVFHPGVPEVIQPYLPIAVVAALDAVFGGLRAYLERIFDPKVFVVSFVFNVLVAALIVYVGDQLGVGTQLSTAIIVVLGIRIFGNTAALRRRLFGA.

Transmembrane regions (helical) follow at residues 12-32 (MIGI…HPGV), 35-55 (VIQP…FGGL), and 67-87 (VFVV…YVGD).

Belongs to the sbp family.

The protein resides in the cell membrane. This is an uncharacterized protein from Mycobacterium bovis (strain ATCC BAA-935 / AF2122/97).